The chain runs to 209 residues: Kynurenine formamidase (209 aa).

Residue Trp20 participates in substrate binding. Residues His50, His54, and Asp56 each coordinate Zn(2+). Catalysis depends on His60, which acts as the Proton donor/acceptor. His161 and Glu173 together coordinate Zn(2+).

The protein belongs to the Cyclase 1 superfamily. KynB family. As to quaternary structure, homodimer. The cofactor is Zn(2+).

The enzyme catalyses N-formyl-L-kynurenine + H2O = L-kynurenine + formate + H(+). It participates in amino-acid degradation; L-tryptophan degradation via kynurenine pathway; L-kynurenine from L-tryptophan: step 2/2. Its function is as follows. Catalyzes the hydrolysis of N-formyl-L-kynurenine to L-kynurenine, the second step in the kynurenine pathway of tryptophan degradation. This Bacillus cytotoxicus (strain DSM 22905 / CIP 110041 / 391-98 / NVH 391-98) protein is Kynurenine formamidase.